Here is a 66-residue protein sequence, read N- to C-terminus: Phylloseptin-Az3 (66 aa).

Positions 1-22 are cleaved as a signal peptide; that stretch reads MAFLKKSLFLVLFLGLVSLSIC. Residues 23 to 44 constitute a propeptide that is removed on maturation; it reads EEEKRETEEEEYNQEDDDKSEE. The residue at position 65 (F65) is a Phenylalanine amide.

In terms of tissue distribution, expressed by the skin glands.

Its subcellular location is the secreted. Its function is as follows. Has antimicrobial activity. In Pithecopus azureus (Orange-legged monkey tree frog), this protein is Phylloseptin-Az3.